Here is a 380-residue protein sequence, read N- to C-terminus: Erythronate-4-phosphate dehydrogenase (380 aa).

Residues Ser45 and Thr66 each contribute to the substrate site. NAD(+) contacts are provided by residues Asp146, Thr174, 205-207, and Asp231; that span reads ASR. Residue Arg207 is part of the active site. Glu236 is an active-site residue. His253 acts as the Proton donor in catalysis. Residue Gly256 coordinates NAD(+). Tyr257 is a binding site for substrate.

It belongs to the D-isomer specific 2-hydroxyacid dehydrogenase family. PdxB subfamily. In terms of assembly, homodimer.

It localises to the cytoplasm. The enzyme catalyses 4-phospho-D-erythronate + NAD(+) = (R)-3-hydroxy-2-oxo-4-phosphooxybutanoate + NADH + H(+). Its pathway is cofactor biosynthesis; pyridoxine 5'-phosphate biosynthesis; pyridoxine 5'-phosphate from D-erythrose 4-phosphate: step 2/5. Catalyzes the oxidation of erythronate-4-phosphate to 3-hydroxy-2-oxo-4-phosphonooxybutanoate. This chain is Erythronate-4-phosphate dehydrogenase, found in Pseudomonas fluorescens (strain SBW25).